A 195-amino-acid chain; its full sequence is Capsid protein (195 aa).

The segment at 148–195 (NAPILSTLPETTVVRRRGRSPRRRTPSPRRRRSQSPRRRRSASPASQC) is disordered. The span at 161–188 (VRRRGRSPRRRTPSPRRRRSQSPRRRRS) shows a compositional bias: basic residues. 3 positions are modified to phosphoserine; by host: S167, S174, and S182. The stretch at 167–172 (SPRRRT) is one 1; half-length repeat. The 3 X 7 AA repeats of S-P-R-R-R-[PR]-S stretch occupies residues 167–188 (SPRRRTPSPRRRRSQSPRRRRS). The short motif at 170 to 187 (RRTPSPRRRRSQSPRRRR) is the Bipartite nuclear localization signal element. 2 tandem repeats follow at residues 174–180 (SPRRRRS) and 182–188 (SPRRRRS). The interval 189–195 (ASPASQC) is RNA binding.

It belongs to the orthohepadnavirus core antigen family. In terms of assembly, homodimerizes, then multimerizes. Interacts with cytosol exposed regions of viral L glycoprotein present in the reticulum-to-Golgi compartment. Interacts with human FLNB. Phosphorylated form interacts with host importin alpha; this interaction depends on the exposure of the NLS, which itself depends upon genome maturation and/or phosphorylation of the capsid protein. Interacts with host NUP153. Post-translationally, phosphorylated by host SRPK1, SRPK2, and maybe protein kinase C or GAPDH. Phosphorylation is critical for pregenomic RNA packaging. Protein kinase C phosphorylation is stimulated by HBx protein and may play a role in transport of the viral genome to the nucleus at the late step during the viral replication cycle.

The protein resides in the virion. Its subcellular location is the host cytoplasm. Self assembles to form an icosahedral capsid. Most capsids appear to be large particles with an icosahedral symmetry of T=4 and consist of 240 copies of capsid protein, though a fraction forms smaller T=3 particles consisting of 180 capsid proteins. Entering capsids are transported along microtubules to the nucleus. Phosphorylation of the capsid is thought to induce exposure of nuclear localization signal in the C-terminal portion of the capsid protein that allows binding to the nuclear pore complex via the importin (karyopherin-) alpha and beta. Capsids are imported in intact form through the nuclear pore into the nuclear basket, where it probably binds NUP153. Only capsids that contain the mature viral genome can release the viral DNA and capsid protein into the nucleoplasm. Immature capsids get stuck in the basket. Capsids encapsulate the pre-genomic RNA and the P protein. Pre-genomic RNA is reverse-transcribed into DNA while the capsid is still in the cytoplasm. The capsid can then either be directed to the nucleus, providing more genomes for transcription, or bud through the endoplasmic reticulum to provide new virions. The sequence is that of Capsid protein from Hepatitis B virus genotype G (isolate United States/USG17/2002) (HBV-G).